A 379-amino-acid chain; its full sequence is NADH-quinone oxidoreductase subunit D 2 (379 aa).

This sequence belongs to the complex I 49 kDa subunit family. As to quaternary structure, NDH-1 is composed of 14 different subunits. Subunits NuoB, C, D, E, F, and G constitute the peripheral sector of the complex.

The protein localises to the cell inner membrane. It carries out the reaction a quinone + NADH + 5 H(+)(in) = a quinol + NAD(+) + 4 H(+)(out). In terms of biological role, NDH-1 shuttles electrons from NADH, via FMN and iron-sulfur (Fe-S) centers, to quinones in the respiratory chain. The immediate electron acceptor for the enzyme in this species is believed to be ubiquinone. Couples the redox reaction to proton translocation (for every two electrons transferred, four hydrogen ions are translocated across the cytoplasmic membrane), and thus conserves the redox energy in a proton gradient. This is NADH-quinone oxidoreductase subunit D 2 from Anaeromyxobacter dehalogenans (strain 2CP-C).